Here is a 325-residue protein sequence, read N- to C-terminus: Probable tRNA-dihydrouridine synthase 2 (325 aa).

18-20 contributes to the FMN binding site; it reads PME. The Proton donor role is filled by Cys105. FMN is bound by residues Lys143, 208 to 210, and 232 to 233; these read NGD and GR.

The protein belongs to the Dus family. FMN serves as cofactor.

The catalysed reaction is a 5,6-dihydrouridine in tRNA + NAD(+) = a uridine in tRNA + NADH + H(+). The enzyme catalyses a 5,6-dihydrouridine in tRNA + NADP(+) = a uridine in tRNA + NADPH + H(+). Functionally, catalyzes the synthesis of 5,6-dihydrouridine (D), a modified base found in the D-loop of most tRNAs, via the reduction of the C5-C6 double bond in target uridines. This is Probable tRNA-dihydrouridine synthase 2 (dus2) from Bacillus subtilis (strain 168).